The following is a 288-amino-acid chain: HTH-type transcriptional regulator YofA (288 aa).

The region spanning 1–58 is the HTH lysR-type domain; that stretch reads MESGDLKIFQAVARKGSISKAAESLHYVQSNVTNRIQQLERQLQTQLFYRTNRGMTLT. The H-T-H motif DNA-binding region spans 18 to 37; sequence ISKAAESLHYVQSNVTNRIQ.

The protein belongs to the LysR transcriptional regulatory family.

The protein localises to the cytoplasm. Functionally, regulates expression of the cell division protein ftsW, and is essential for cell viability during stationary phase. This chain is HTH-type transcriptional regulator YofA (yofA), found in Bacillus velezensis (strain DSM 23117 / BGSC 10A6 / LMG 26770 / FZB42) (Bacillus amyloliquefaciens subsp. plantarum).